Reading from the N-terminus, the 607-residue chain is NADH-ubiquinone oxidoreductase chain 5 (607 aa).

16 consecutive transmembrane segments (helical) span residues 3–23 (IFTTSILLIFILLLSPILISM), 35–55 (YTTTSIKFSFIISLLPLLMFF), 84–104 (FFSILFTSVALFVTWSIMQFS), 117–137 (FIKYLTLFLITMLILTSANNM), 140–160 (LFIGWEGVGIMSFLLIGWWYG), 171–191 (AILYNRIGDIGFILAMVWFSL), 210–230 (LIPLMGLLIAATGKSAQFGLH), 241–261 (TPVSALLHSSTMVVAGIFLLV), 272–292 (FILTTMLCLGALTTLFTAICA), 301–320 (IIAFSTSSQLGLMMVTLGMN), 324–344 (LAFLHICTHAFFKAMLFMCSG), 365–385 (IMPFTSSCLVIGSLALTGMPF), 405–427 (NAWALLITLIATSMTAMYSMRII), 457–477 (LAFGSIFAGFVISYNIPPTSI), 482–502 (MPWFLKTTALIISVLGFLIAL), and 586–606 (LYFMSFLINIILIIILYSINL).

This sequence belongs to the complex I subunit 5 family. As to quaternary structure, core subunit of respiratory chain NADH dehydrogenase (Complex I) which is composed of 45 different subunits.

The protein resides in the mitochondrion inner membrane. It carries out the reaction a ubiquinone + NADH + 5 H(+)(in) = a ubiquinol + NAD(+) + 4 H(+)(out). Core subunit of the mitochondrial membrane respiratory chain NADH dehydrogenase (Complex I) which catalyzes electron transfer from NADH through the respiratory chain, using ubiquinone as an electron acceptor. Essential for the catalytic activity and assembly of complex I. This Mus musculus (Mouse) protein is NADH-ubiquinone oxidoreductase chain 5 (Mtnd5).